The following is a 297-amino-acid chain: Transmembrane protein 169 (297 aa).

Positions 1–88 are disordered; it reads MEESAPVESQ…EGEDFLDYPG (88 aa). At 1–159 the chain is on the extracellular side; it reads MEESAPVESQ…CQVGADQGPH (159 aa). The span at 22-31 shows a compositional bias: low complexity; it reads RRAVAAVLAL. 2 stretches are compositionally biased toward acidic residues: residues 61 to 70 and 78 to 88; these read KTDEEPEESE and EEGEDFLDYPG. Residues 160–180 traverse the membrane as a helical segment; sequence VVLWTLVCLPVVFVLSFVVSF. Residues 181–210 are Cytoplasmic-facing; sequence YYGTITWYNIFLVYNEERTFWHKISCCPCL. A helical transmembrane segment spans residues 211 to 231; the sequence is ILFYPVLIMTMASSLGLYAAV. Topologically, residues 232–297 are extracellular; sequence AQLSWSWAAW…PIQEVETSTV (66 aa).

The protein localises to the membrane. This chain is Transmembrane protein 169 (Tmem169), found in Mus musculus (Mouse).